The following is a 311-amino-acid chain: Ribonuclease HIII (311 aa).

One can recognise an RNase H type-2 domain in the interval 95–311 (MSIVGSDEVG…NTEKAFRLLK (217 aa)). Positions 101, 102, and 206 each coordinate a divalent metal cation.

The protein belongs to the RNase HII family. RnhC subfamily. Requires Mn(2+) as cofactor. It depends on Mg(2+) as a cofactor.

The protein localises to the cytoplasm. The catalysed reaction is Endonucleolytic cleavage to 5'-phosphomonoester.. In terms of biological role, endonuclease that specifically degrades the RNA of RNA-DNA hybrids. This Bacillus cereus (strain AH187) protein is Ribonuclease HIII.